Here is a 352-residue protein sequence, read N- to C-terminus: MLLFSVLLLLSLVTGTQLGPRTPLPEAGVAILGRARGAHRPQPPHPPSPVSECGDRSIFEGRTRYSRITGGMEAEVGEFPWQVSIQARSEPFCGGSILNKWWILTAAHCLYSEELFPEELSVVLGTNDLTSPSMEIKEVASIILHKDFKRANMDNDIALLLLASPIKLDDLKVPICLPTQPGPATWRECWVAGWGQTNAADKNSVKTDLMKAPMVIMDWEECSKMFPKLTKNMLCAGYKNESYDACKGDSGGPLVCTPEPGEKWYQVGIISWGKSCGEKNTPGIYTSLVNYNLWIEKVTQLEGRPFNAEKRRTSVKQKPMGSPVSGVPEPGSPRSWLLLCPLSHVLFRAILY.

The N-terminal stretch at M1–L18 is a signal peptide. A Peptidase S1 domain is found at I68–Q300. A disulfide bond links C93 and C109. Active-site charge relay system residues include H108 and D156. Cystine bridges form between C189/C256, C222/C235, and C246/C276. An N-linked (GlcNAc...) asparagine glycan is attached at N240. S250 serves as the catalytic Charge relay system. The interval A308 to P330 is disordered. Positions P319 to P330 are enriched in low complexity. The GPI-anchor amidated serine moiety is linked to residue S325. A propeptide spans G326–Y352 (removed in mature form).

It belongs to the peptidase S1 family. As to expression, only detected in testis. Expressed in spermatogonia, spermatocytes, spermatids, Leydig and Sertoli cells. Expressed in prostate cancer and ovarian cancer (at protein level).

It localises to the cell membrane. The protein localises to the cytoplasm. The protein resides in the cytosol. Its function is as follows. Probable serine protease, which plays a crucial role in the fertility of male mice including sperm migration and sperm-egg interaction. In Homo sapiens (Human), this protein is Serine protease 55 (PRSS55).